We begin with the raw amino-acid sequence, 404 residues long: MKLPIYLDYSATTPVDPRVAEKMMQFLTLDGTFGNPASRSHRFGWQAEEAVDIARNQIAELVGADPREIVFTSGATESDNLAIKGAANFYQKKGKHIITSKTEHKAVLDTCRQLEREGFEVTYLAPQRNGIIDLNELEAAMRDDTILVSIMHVNNEIGVVQDIATIGEMCRARGIIYHVDATQSVGKLPIDLSQLKVDLMSFSGHKIYGPKGIGALYVRRKPRIRIEAQMHGGGHERGMRSGTLPVHQIVGMGEAYRIAKEEMETEMARLRGLRNRLWNGIKDIEEVYLNGDLEQGAPNILNVSFNYVEGESLIMALKDLAVSSGSACTSATLEPSYVLRALGMNDELAHSSIRFSLGRFTTEEEIDYTIDLVRKSIGRLRDLSPLWEMYKQGVDLNSIEWAHH.

Pyridoxal 5'-phosphate-binding positions include 75 to 76 (AT), N155, Q183, and 203 to 205 (SGH). Residue K206 is modified to N6-(pyridoxal phosphate)lysine. T243 contributes to the pyridoxal 5'-phosphate binding site. C328 functions as the Cysteine persulfide intermediate in the catalytic mechanism. C328 is a [2Fe-2S] cluster binding site.

The protein belongs to the class-V pyridoxal-phosphate-dependent aminotransferase family. NifS/IscS subfamily. Homodimer. Forms a heterotetramer with IscU, interacts with other sulfur acceptors. Pyridoxal 5'-phosphate is required as a cofactor.

The protein resides in the cytoplasm. It catalyses the reaction (sulfur carrier)-H + L-cysteine = (sulfur carrier)-SH + L-alanine. It functions in the pathway cofactor biosynthesis; iron-sulfur cluster biosynthesis. Functionally, master enzyme that delivers sulfur to a number of partners involved in Fe-S cluster assembly, tRNA modification or cofactor biosynthesis. Catalyzes the removal of elemental sulfur and selenium atoms from cysteine and selenocysteine to produce alanine. Functions as a sulfur delivery protein for Fe-S cluster synthesis onto IscU, an Fe-S scaffold assembly protein, as well as other S acceptor proteins. Also functions as a selenium delivery protein in the pathway for the biosynthesis of selenophosphate. In Salmonella typhi, this protein is Cysteine desulfurase IscS.